The primary structure comprises 567 residues: UPF0313 protein TM_0337 (567 aa).

Positions 288–560 (KAIETVKFSI…NKMKENVLFK (273 aa)) constitute a Radical SAM core domain. Residues C303, C307, and C310 each contribute to the [4Fe-4S] cluster site.

Belongs to the UPF0313 family. Requires [4Fe-4S] cluster as cofactor.

In Thermotoga maritima (strain ATCC 43589 / DSM 3109 / JCM 10099 / NBRC 100826 / MSB8), this protein is UPF0313 protein TM_0337.